The following is a 204-amino-acid chain: Ribosomal RNA small subunit methyltransferase G (204 aa).

S-adenosyl-L-methionine is bound by residues Gly-74, Leu-79, Ala-125–Tyr-126, and Arg-138.

It belongs to the methyltransferase superfamily. RNA methyltransferase RsmG family.

The protein resides in the cytoplasm. Specifically methylates the N7 position of a guanine in 16S rRNA. The sequence is that of Ribosomal RNA small subunit methyltransferase G from Brachyspira hyodysenteriae (strain ATCC 49526 / WA1).